Consider the following 104-residue polypeptide: Conantokin-P (104 aa).

The first 26 residues, 1-26, serve as a signal peptide directing secretion; it reads MQLYTYLYLLVPLVTFHLILSTGTLA. The propeptide occupies 27 to 80; that stretch reads HGGTLTERRSTDTTALKPEPVLLQKSDARSTDDNDKDRLTQMKRILKKRGNKAR. A disordered region spans residues 29-87; sequence GTLTERRSTDTTALKPEPVLLQKSDARSTDDNDKDRLTQMKRILKKRGNKARGEEEHSK. Over residues 52-66 the composition is skewed to basic and acidic residues; it reads SDARSTDDNDKDRLT. 4-carboxyglutamate is present on residues Glu-83, Glu-84, Glu-90, Glu-94, and Glu-103. Positions 90 and 94 each coordinate a divalent metal cation. Cys-91 and Cys-104 are disulfide-bonded.

This sequence belongs to the conotoxin B superfamily. As to expression, expressed by the venom duct.

It is found in the secreted. In terms of biological role, conantokins inhibit N-methyl-D-aspartate (NMDA) receptors. This toxin has the highest potency for the NR2B/GRIN2B subunit, followed by NR2A/GRIN2A, NR2C/GRIN2C, and NR2D/GRIN2D subunits. This is Conantokin-P from Conus purpurascens (Purple cone).